The sequence spans 62 residues: Endoregulin (62 aa).

A helical transmembrane segment spans residues 25 to 45 (LAVIILFITAVLLLILFAIVF).

In terms of assembly, homooligomer. Can also form heterooligomers with other sarcoplasmic/endoplasmic reticulum calcium ATPase (SERCA) regulators ARLN, PLN, SLN and STRIT1/DWORF. Monomer. Interacts as a monomer with ATP2A2/SERCA2; the interaction results in inhibition of ATP2A2 Ca(2+) affinity.

Its subcellular location is the endoplasmic reticulum membrane. Functionally, inhibits the activity of the calcium ATPases ATP2A2/SERCA2 and ATP2A3/SERCA3 by decreasing their apparent affinity for Ca(2+). This is Endoregulin from Homo sapiens (Human).